A 181-amino-acid chain; its full sequence is uncharacterized protein (181 aa).

Residues 25-47 are disordered; the sequence is ELANEVSAGDEEPYDDDIWESED. Acidic residues predominate over residues 32–47; that stretch reads AGDEEPYDDDIWESED. Residues 149–169 traverse the membrane as a helical segment; the sequence is ILTLILLSCGLLMLFIGYPIL.

It localises to the cytoplasm. The protein localises to the membrane. This is an uncharacterized protein from Schizosaccharomyces pombe (strain 972 / ATCC 24843) (Fission yeast).